The sequence spans 142 residues: Large ribosomal subunit protein bL17 (142 aa).

Belongs to the bacterial ribosomal protein bL17 family. Part of the 50S ribosomal subunit. Contacts protein L32.

The protein is Large ribosomal subunit protein bL17 of Chlamydia abortus (strain DSM 27085 / S26/3) (Chlamydophila abortus).